The sequence spans 1146 residues: Cell division cycle and apoptosis regulator protein 1 (1146 aa).

The tract at residues 1-246 is interaction with AR; it reads MAQFGGQKNP…AQPQPQSLLQ (246 aa). Positions 200–657 are interaction with GATA2; it reads QRIQTLPNQN…RALSSKGLKS (458 aa). Residues 282–351 form a disordered region; it reads IVSQPQPARR…RRERERSPRR (70 aa). Composition is skewed to basic and acidic residues over residues 290 to 331 and 338 to 349; these read RRLD…ERSP and ERSPRRERERSP. Ser453 bears the Phosphoserine mark. Residues 591–615 adopt a coiled-coil conformation; that stretch reads KQQLVEKLQGERKKADGEQDEEEKD. The segment at 599–635 is disordered; it reads QGERKKADGEQDEEEKDDGEVKEIATPTHWSKLDPKA. Residues 608-618 show a composition bias toward acidic residues; sequence EQDEEEKDDGE. The residue at position 624 (Thr624) is a Phosphothreonine. The region spanning 633–667 is the SAP domain; sequence PKAMKVNDLRKELESRALSSKGLKSQLIARLTKQL. Lys634 is covalently cross-linked (Glycyl lysine isopeptide (Lys-Gly) (interchain with G-Cter in ubiquitin)). The interaction with GATA1 stretch occupies residues 640–1146; sequence DLRKELESRA…EKSKENGSGV (507 aa). Thr664 is subject to Phosphothreonine. Composition is skewed to basic and acidic residues over residues 671-684, 691-716, 793-814, and 829-852; these read EQKEEQKELEKSEK, DKKSEDDKEEEERKRQEEVERQRQER, KEDKKDKEKKSKKEERKDKKEE, and SGDDKDKKEDRDERKKEEKRKDDS. Disordered regions lie at residues 671–716 and 793–912; these read EQKE…RQER and KEDK…KEKP. Residues Ser682 and Ser694 each carry the phosphoserine modification. The segment covering 853–884 has biased composition (acidic residues); sequence KDDDETEEDNNQDEYDPMEAEEAEDEDDDREE. The residue at position 858 (Thr858) is a Phosphothreonine. A compositionally biased stretch (basic and acidic residues) spans 885–912; the sequence is EEVKRDDKRDVSRYCKDRPAKDKEKEKP. A Glycyl lysine isopeptide (Lys-Gly) (interchain with G-Cter in SUMO1); alternate cross-link involves residue Lys1008. Lys1008 is covalently cross-linked (Glycyl lysine isopeptide (Lys-Gly) (interchain with G-Cter in SUMO2); alternate). The stretch at 1029–1110 forms a coiled coil; it reads DVGSLLQKLE…LQFENQLNKT (82 aa). Glycyl lysine isopeptide (Lys-Gly) (interchain with G-Cter in SUMO2) cross-links involve residues Lys1063 and Lys1131.

Directly interacts with ESR1, NR3C1 and p53/TP53. Interacts (via N-terminus) with CALCOCO1. Interacts with MED1 and GATA1. Interacts with AR and GATA2.

It is found in the cytoplasm. The protein localises to the perinuclear region. Its function is as follows. Associates with components of the Mediator and p160 coactivator complexes that play a role as intermediaries transducing regulatory signals from upstream transcriptional activator proteins to basal transcription machinery at the core promoter. Recruited to endogenous nuclear receptor target genes in response to the appropriate hormone. Also functions as a p53 coactivator. May thus play an important role in transcriptional regulation. May be involved in apoptosis signaling in the presence of the retinoid CD437. Apoptosis induction involves sequestration of 14-3-3 protein(s) and mediated altered expression of multiple cell cycle regulatory genes including MYC, CCNB1 and CDKN1A. Plays a role in cell cycle progression and/or cell proliferation. In association with CALCOCO1 enhances GATA1- and MED1-mediated transcriptional activation from the gamma-globin promoter during erythroid differentiation of K562 erythroleukemia cells. Can act as a both a coactivator and corepressor of AR-mediated transcription. Contributes to chromatin looping and AR transcription complex assembly by stabilizing AR-GATA2 association on chromatin and facilitating MED1 and RNA polymerase II recruitment to AR-binding sites. May play an important role in the growth and tumorigenesis of prostate cancer cells. The chain is Cell division cycle and apoptosis regulator protein 1 (Ccar1) from Mus musculus (Mouse).